We begin with the raw amino-acid sequence, 22 residues long: Caerin-3.3 (22 aa).

K22 bears the Lysine amide mark.

Expressed by the skin parotoid and/or rostral glands.

It is found in the secreted. Antibacterial peptide, that adopts an alpha helical conformation which can disrupt bacterial membranes. Each caerin displays a different antimicrobial specificity. This Ranoidea caerulea (Green tree frog) protein is Caerin-3.3.